Consider the following 173-residue polypeptide: Photosystem I assembly protein Ycf3 (173 aa).

TPR repeat units lie at residues 35–68 (AFVYYRDGMSAQAEGEYAEALEYYEEALTLEEDT), 72–105 (GYILYNMGLIYASNGDHNKALELYHQAIELNPRL), and 120–153 (GEKEKEAGDNEAGEALFDQAADYWIRAIRMAPNN).

Belongs to the Ycf3 family.

Its subcellular location is the cellular thylakoid membrane. In terms of biological role, essential for the assembly of the photosystem I (PSI) complex. May act as a chaperone-like factor to guide the assembly of the PSI subunits. The chain is Photosystem I assembly protein Ycf3 from Nostoc punctiforme (strain ATCC 29133 / PCC 73102).